The primary structure comprises 169 residues: Cytochrome c-type biogenesis protein CcmE (169 aa).

Residues 1-7 are Cytoplasmic-facing; the sequence is MTRKQRR. Residues 8–28 form a helical; Signal-anchor for type II membrane protein membrane-spanning segment; sequence MTIIGGSLAVLALAAALVLNA. Over 29–169 the chain is Periplasmic; that stretch reads LRDSIVFFST…AQGNPQGAVR (141 aa). Heme is bound by residues H122 and Y126. Positions 143–169 are disordered; that stretch reads DDYGGKASDGVKPAATTAQGNPQGAVR. Residues 158-169 show a composition bias toward polar residues; sequence TTAQGNPQGAVR.

This sequence belongs to the CcmE/CycJ family.

The protein resides in the cell inner membrane. In terms of biological role, heme chaperone required for the biogenesis of c-type cytochromes. Transiently binds heme delivered by CcmC and transfers the heme to apo-cytochromes in a process facilitated by CcmF and CcmH. The polypeptide is Cytochrome c-type biogenesis protein CcmE (Bradyrhizobium diazoefficiens (strain JCM 10833 / BCRC 13528 / IAM 13628 / NBRC 14792 / USDA 110)).